Reading from the N-terminus, the 102-residue chain is Large ribosomal subunit protein uL23 (102 aa).

This sequence belongs to the universal ribosomal protein uL23 family. Part of the 50S ribosomal subunit. Contacts protein L29, and trigger factor when it is bound to the ribosome.

One of the early assembly proteins it binds 23S rRNA. One of the proteins that surrounds the polypeptide exit tunnel on the outside of the ribosome. Forms the main docking site for trigger factor binding to the ribosome. The polypeptide is Large ribosomal subunit protein uL23 (Chromobacterium violaceum (strain ATCC 12472 / DSM 30191 / JCM 1249 / CCUG 213 / NBRC 12614 / NCIMB 9131 / NCTC 9757 / MK)).